Reading from the N-terminus, the 196-residue chain is C-type lectin domain family 3 member A (196 aa).

The N-terminal stretch at 1 to 22 (MAKNGLVLCILVVSLLLDQTDG) is a signal peptide. Cystine bridges form between C68/C78, C95/C191, and C167/C183. Residues 74–192 (VHKKCYLASE…CRSSKRYICE (119 aa)) enclose the C-type lectin domain.

The protein resides in the secreted. Its function is as follows. Promotes cell adhesion to laminin and fibronectin. The chain is C-type lectin domain family 3 member A (Clec3a) from Mus musculus (Mouse).